The chain runs to 993 residues: MDQYPDENEEFELQYQDELELLEDLPDEFNAYDGPSTSKQAAEKQKENRAPVAALRDSTRLGNSTLGSPQLSQITFGASQLGGEEEAEGTSSGGQVNRRLFGTPKGPPVGRGCSTPFQRMPAIQELENTQLTSRSYGLEKENAAANQLQEVGLKNVNKRRLERDLFGDIDDLFHESYEDPMVKKARTEEQRDHEAIERILELRRKMRESSKTLRKDDVSRLKALHDFKMRNLSYEIPNWPFLAIQRSDLERIYVRFHSEDYEQRQLDLISARGEVVGSLLGEAKDKIWQEAGEIVLSRATAAEDADVTLVNSNANSEPGRLWVDKYKPRKYIDLLSDEMTNRSLLYWLKMWDKVVFGKAFHSKREQEAVTGEGGTAGGAANQLNSFNKRTGKFESNGGWRQRKSRQALNTNVDALGRPMQKVALLCGPPGLGKTTLAHTIARHAGYNVREINASDDRSPEAFKLALENGTQMSSVLNEDKRPNCIVLDEIDGAPRQSIDYLVKFISDAVYTKVKAKGAKAEHNVLKRPIICICNDVYDPALRPLRQVAFVVTFPPIDAARLAERLVKIAFKEQLKTDFGSLIALAEKSGNDVRSCISSMQFFNAQKHSLTLQDVLNNNLGQKDRHQGLFAVWDAIFRIQRPRKTLHTDANKVDEPAQVTMTNTSVTTRVRNVLEVVHSSGDYERLTQGVYENYLQQKMPDPNFTGVCEALKWFCFTDTVQHQISRQQNYSVYPYLQYGFVAWHLLFATLAWPKIAFPTRGFEFQQKSTNQRNIFQALCKGVTTSALGVGQGGTLLLDTVPLLKRILSPQLRSVAVQLLSPKEQQDLRHTIEVMVDLGLTFVQVKSQEGHYVFQTEPDLDALSAFPGYTGLSLPYFSRQLIAREVDLERIRRAAPKGGAPSAPAAKKKTSGAAAQLPNHLQTLKPKPISASNMHSAPKQQLTKDFFGRITHKSTSTNSAEESKTDAIVKSPIWYRYKEGFNNAVRKDVHIHELL.

The segment at 26–72 (PDEFNAYDGPSTSKQAAEKQKENRAPVAALRDSTRLGNSTLGSPQLS) is disordered. A compositionally biased stretch (polar residues) spans 60-72 (RLGNSTLGSPQLS). Residue 427–434 (GPPGLGKT) coordinates ATP. Residues 892 to 913 (AAPKGGAPSAPAAKKKTSGAAA) form a disordered region. A compositionally biased stretch (low complexity) spans 894–913 (PKGGAPSAPAAKKKTSGAAA).

Belongs to the activator 1 small subunits family. CTF18 subfamily. In terms of assembly, component of the CTF18-RFC complex.

It is found in the nucleus. Functionally, chromosome cohesion factor involved in sister chromatid cohesion and fidelity of chromosome transmission. Component of one of the cell nuclear antigen loader complexes, CTF18-replication factor C (CTF18-RFC). The CTF18-RFC complex catalyzes the ATP-dependent loading of PCNA onto primed and gapped DNA and has weak ATPase activity. The CTF18-RFC complex catalyzes the ATP-dependent loading of PCNA onto primed and gapped DNA. This chain is Chromosome transmission fidelity protein 18 homolog, found in Drosophila melanogaster (Fruit fly).